Reading from the N-terminus, the 318-residue chain is Putative enoyl-CoA hydratase EchA13 (318 aa).

The tract at residues 90–110 (LGSADDIRERSPGPDQHPSYR) is disordered.

The protein belongs to the enoyl-CoA hydratase/isomerase family.

The protein is Putative enoyl-CoA hydratase EchA13 (echA13) of Mycobacterium tuberculosis (strain ATCC 25618 / H37Rv).